The chain runs to 367 residues: Probable peptidoglycan glycosyltransferase FtsW (367 aa).

The Cytoplasmic segment spans residues 1-8 (MRRVEGYD). The chain crosses the membrane as a helical span at residues 9–29 (MIVLMMAVILTCFGVVMVYSA). Topologically, residues 30–49 (SSVMAAKKFHDGFFFLKRQS) are periplasmic. The helical transmembrane segment at 50 to 70 (LYALIGFIGMGVAMHVDYHVW) threads the bilayer. Residues 71 to 72 (KK) lie on the Cytoplasmic side of the membrane. The helical transmembrane segment at 73 to 93 (WAVPLFLGTFFLLLLVFVPGI) threads the bilayer. Residues 94 to 138 (GGTAKGASRWIRLPGFNFQPSELAKVALIMYMAYSLEKRQDKLKQ) are Periplasmic-facing. Residues 139–159 (FMSGFFPYMLILGVFIAVLLA) form a helical membrane-spanning segment. Over 160 to 161 (QH) the chain is Cytoplasmic. The helical transmembrane segment at 162 to 182 (DMGAALTMLAVAIVMLFAAGT) threads the bilayer. A topological domain (periplasmic) is located at residue lysine 183. The helical transmembrane segment at 184–204 (VQYILGMGLVALPGICYLVFT) threads the bilayer. At 205-225 (KAYRMRRITAFLDPWQDPTDA) the chain is on the cytoplasmic side. Residues 226–246 (GFQIIQSWLALGTGGFFGQGL) form a helical membrane-spanning segment. The Periplasmic portion of the chain corresponds to 247–266 (GEGKQKLFYLPEAHTDFILS). A helical transmembrane segment spans residues 267 to 287 (VLGEEMGFIGVVVIASMFLLL). The Cytoplasmic segment spans residues 288-304 (VQRSIRVAIAAEDSFGR). The helical transmembrane segment at 305–325 (FLAFGIAILLGLEAFVNMAVV) threads the bilayer. The Periplasmic portion of the chain corresponds to 326–335 (TGLLPTKGIA). Residues 336–356 (LPFLSYGGSSLIISLCSVGVL) traverse the membrane as a helical segment. Over 357–367 (LNVSTRMRGAA) the chain is Cytoplasmic.

The protein belongs to the SEDS family. FtsW subfamily.

Its subcellular location is the cell inner membrane. It carries out the reaction [GlcNAc-(1-&gt;4)-Mur2Ac(oyl-L-Ala-gamma-D-Glu-L-Lys-D-Ala-D-Ala)](n)-di-trans,octa-cis-undecaprenyl diphosphate + beta-D-GlcNAc-(1-&gt;4)-Mur2Ac(oyl-L-Ala-gamma-D-Glu-L-Lys-D-Ala-D-Ala)-di-trans,octa-cis-undecaprenyl diphosphate = [GlcNAc-(1-&gt;4)-Mur2Ac(oyl-L-Ala-gamma-D-Glu-L-Lys-D-Ala-D-Ala)](n+1)-di-trans,octa-cis-undecaprenyl diphosphate + di-trans,octa-cis-undecaprenyl diphosphate + H(+). It participates in cell wall biogenesis; peptidoglycan biosynthesis. Peptidoglycan polymerase that is essential for cell division. This is Probable peptidoglycan glycosyltransferase FtsW from Geobacter sp. (strain M18).